We begin with the raw amino-acid sequence, 633 residues long: Glutamyl-tRNA(Gln) amidotransferase subunit E (633 aa).

The protein belongs to the GatB/GatE family. GatE subfamily. As to quaternary structure, heterodimer of GatD and GatE.

The catalysed reaction is L-glutamyl-tRNA(Gln) + L-glutamine + ATP + H2O = L-glutaminyl-tRNA(Gln) + L-glutamate + ADP + phosphate + H(+). In terms of biological role, allows the formation of correctly charged Gln-tRNA(Gln) through the transamidation of misacylated Glu-tRNA(Gln) in organisms which lack glutaminyl-tRNA synthetase. The reaction takes place in the presence of glutamine and ATP through an activated gamma-phospho-Glu-tRNA(Gln). The GatDE system is specific for glutamate and does not act on aspartate. This chain is Glutamyl-tRNA(Gln) amidotransferase subunit E, found in Methanosarcina acetivorans (strain ATCC 35395 / DSM 2834 / JCM 12185 / C2A).